The primary structure comprises 1127 residues: Glutamate receptor-interacting protein 1 (1127 aa).

Gln-11 is lipidated: S-palmitoyl cysteine. Ser-43 carries the post-translational modification Phosphoserine. PDZ domains follow at residues Val-53 to Leu-136, Thr-150 to Val-238, Leu-252 to His-336, Glu-471 to Val-560, His-572 to Glu-657, and Thr-672 to Thr-754. Disordered regions lie at residues Lys-752–Asp-802, Lys-840–Asp-865, and Met-942–Ser-980. Composition is skewed to polar residues over residues Lys-840 to Tyr-856 and Leu-947 to Pro-973. A PDZ 7 domain is found at Lys-1003 to Pro-1085. The interval Phe-1108–Leu-1127 is disordered.

In terms of assembly, interacts with EFNB3, GRIA2, GRIA3, GRIPAP1/GRASP1, PPFIA1, PPFIA4, FRAS1, PTPRF, liprins-alpha and the C-terminal tail of PRLHR. Can form homomultimers or heteromultimers with GRIP2. Interacts with EFNB1, EPHA7, EPHB2, KIF5A, KIF5B and KIF5C. Forms a ternary complex with GRIA2 and CSPG4. Interacts with ATAD1 in an ATP-dependent manner. ATAD1-catalyzed ATP hydrolysis disrupts binding to ATAD1 and to GRIA2 and leads to AMPAR complex disassembly. Interacts with SLC30A9 and PLCD4. Interacts with BUD23. Forms a complex with NSG1, GRIA2 and STX12; controls the intracellular fate of AMPAR and the endosomal sorting of the GRIA2 subunit toward recycling and membrane targeting. Interacts with NSG1. In terms of processing, palmitoylation of isoform 2. In terms of tissue distribution, expressed in brain. Isoform 2 is the major isoform in brain. Expressed in oligodendrocyte lineage cells.

It is found in the membrane. Its subcellular location is the cytoplasmic vesicle. It localises to the perikaryon. The protein resides in the cell projection. The protein localises to the dendrite. It is found in the cytoplasm. Its subcellular location is the endomembrane system. It localises to the postsynaptic cell membrane. The protein resides in the postsynaptic density. The protein localises to the endoplasmic reticulum membrane. May play a role as a localized scaffold for the assembly of a multiprotein signaling complex and as mediator of the trafficking of its binding partners at specific subcellular location in neurons. Through complex formation with NSG1, GRIA2 and STX12 controls the intracellular fate of AMPAR and the endosomal sorting of the GRIA2 subunit toward recycling and membrane targeting. In Mus musculus (Mouse), this protein is Glutamate receptor-interacting protein 1 (Grip1).